Consider the following 700-residue polypeptide: Calpain-2 catalytic subunit (700 aa).

Position 2 is an N-acetylalanine (A2). Positions 2–19 (AGIAIKLAKDREAAEGLG) are cleaved as a propeptide — anchors to the small subunit. The Calpain catalytic domain maps to 45–344 (LFQDPSFPAL…YSRLEICNLT (300 aa)). I89, G91, and D96 together coordinate Ca(2+). C105 is a catalytic residue. Residues E175, Q229, and K230 each coordinate Ca(2+). Residues H262 and N286 contribute to the active site. E292, D299, Q319, and E323 together coordinate Ca(2+). Positions 345–514 (PDTLTCDSYK…KKADYQAVDD (170 aa)) are domain III. The interval 515–529 (EIEANIEEIDANEED) is linker. The tract at residues 530 to 700 (IDDGFRRLFV…LASWLSFSVL (171 aa)) is domain IV. Ca(2+)-binding residues include A542, D545, E547, E552, D585, D587, S589, K591, E596, D615, D617, S619, T621, E626, D658, and N661. 2 consecutive EF-hand domains span residues 572-605 (FSIETCKIMVDMLDEDGSGKLGLKEFYILWTKIQ) and 602-637 (TKIQKYQKIYREIDVDRSGTMNSYEMRKALEEAGFK).

Belongs to the peptidase C2 family. As to quaternary structure, forms a heterodimer with a small (regulatory) subunit (CAPNS1). Interacts with CPEB3; this leads to cleavage of CPEB3. The cofactor is Ca(2+). In terms of tissue distribution, ubiquitous.

Its subcellular location is the cytoplasm. It localises to the cell membrane. It carries out the reaction Broad endopeptidase specificity.. With respect to regulation, activated by 200-1000 micromolar concentrations of calcium and inhibited by calpastatin. Calcium-regulated non-lysosomal thiol-protease which catalyzes limited proteolysis of substrates involved in cytoskeletal remodeling and signal transduction. Proteolytically cleaves MYOC at 'Arg-226'. Proteolytically cleaves CPEB3 following neuronal stimulation which abolishes CPEB3 translational repressor activity, leading to translation of CPEB3 target mRNAs. The protein is Calpain-2 catalytic subunit (Capn2) of Mus musculus (Mouse).